Reading from the N-terminus, the 399-residue chain is Developmentally-regulated G-protein 2 (399 aa).

The 226-residue stretch at 63–288 (GRVALIGFPS…LLARMWDEMG (226 aa)) folds into the OBG-type G domain. GTP is bound by residues 69-76 (GFPSVGKS), 115-119 (DLPGI), and 246-249 (NKID). Positions 288–366 (GLVRVYSKPQ…EDEDVVQIVK (79 aa)) constitute a TGS domain. The interval 372-399 (EGGRGRFKSHSNAPARIADREKKAPLKQ) is disordered. Positions 388-399 (IADREKKAPLKQ) are enriched in basic and acidic residues.

This sequence belongs to the TRAFAC class OBG-HflX-like GTPase superfamily. OBG GTPase family.

Its subcellular location is the cytoplasm. Its function is as follows. Binds GDP and GTP, and has low GTPase activity. The sequence is that of Developmentally-regulated G-protein 2 (DRG2) from Arabidopsis thaliana (Mouse-ear cress).